Here is a 155-residue protein sequence, read N- to C-terminus: S-ribosylhomocysteine lyase (155 aa).

The Fe cation site is built by histidine 58, histidine 62, and cysteine 125.

This sequence belongs to the LuxS family. As to quaternary structure, homodimer. Fe cation is required as a cofactor.

The enzyme catalyses S-(5-deoxy-D-ribos-5-yl)-L-homocysteine = (S)-4,5-dihydroxypentane-2,3-dione + L-homocysteine. Involved in the synthesis of autoinducer 2 (AI-2) which is secreted by bacteria and is used to communicate both the cell density and the metabolic potential of the environment. The regulation of gene expression in response to changes in cell density is called quorum sensing. Catalyzes the transformation of S-ribosylhomocysteine (RHC) to homocysteine (HC) and 4,5-dihydroxy-2,3-pentadione (DPD). The chain is S-ribosylhomocysteine lyase from Helicobacter pylori (strain HPAG1).